Here is a 599-residue protein sequence, read N- to C-terminus: NTPase KAP family P-loop domain-containing protein 1 (599 aa).

The KAP NTPase domain occupies 1 to 416 (MQQEAAQRES…NTVPITVRLL (416 aa)). 3 consecutive transmembrane segments (helical) span residues 25-45 (GWGVPKLLWFLVFLQPVITEL), 119-139 (VCLALLALLAALCLGVGLLYL), and 156-176 (ALGGAATTLSGSGLLMAVYSV). The tract at residues 543–599 (ALKPPSPPKSPSQDGPQASPRAIIAAGTSHAGQGSGHSKEAHQTRDRTHGGKPRPMA) is disordered. Over residues 579 to 591 (HSKEAHQTRDRTH) the composition is skewed to basic and acidic residues.

The protein resides in the membrane. The polypeptide is NTPase KAP family P-loop domain-containing protein 1 (Nkpd1) (Mus musculus (Mouse)).